Here is a 246-residue protein sequence, read N- to C-terminus: Probable cytokinin riboside 5'-monophosphate phosphoribohydrolase LOGL5 (246 aa).

The span at 1–10 (MMMENSREQQ) shows a compositional bias: basic and acidic residues. Positions 1–28 (MMMENSREQQPESSPANNNSKKKKKKKT) are disordered. Residues E103, 121 to 122 (RK), 138 to 144 (GYGTLEE), and T150 each bind substrate.

This sequence belongs to the LOG family. As to expression, expressed in roots and leaves.

The catalysed reaction is N(6)-(dimethylallyl)adenosine 5'-phosphate + H2O = N(6)-dimethylallyladenine + D-ribose 5-phosphate. The enzyme catalyses 9-ribosyl-trans-zeatin 5'-phosphate + H2O = trans-zeatin + D-ribose 5-phosphate. Cytokinin-activating enzyme working in the direct activation pathway. Phosphoribohydrolase that converts inactive cytokinin nucleotides to the biologically active free-base forms. The protein is Probable cytokinin riboside 5'-monophosphate phosphoribohydrolase LOGL5 (LOGL5) of Oryza sativa subsp. japonica (Rice).